A 36-amino-acid chain; its full sequence is Putative DNA-binding protein inhibitor ID-2B (36 aa).

The sequence is that of Putative DNA-binding protein inhibitor ID-2B (ID2B) from Homo sapiens (Human).